The following is a 545-amino-acid chain: ATP synthase subunit alpha (545 aa).

Residue 173–180 participates in ATP binding; the sequence is GDRQTGKS.

The protein belongs to the ATPase alpha/beta chains family. As to quaternary structure, F-type ATPases have 2 components, CF(1) - the catalytic core - and CF(0) - the membrane proton channel. CF(1) has five subunits: alpha(3), beta(3), gamma(1), delta(1), epsilon(1). CF(0) has three main subunits: a(1), b(2) and c(9-12). The alpha and beta chains form an alternating ring which encloses part of the gamma chain. CF(1) is attached to CF(0) by a central stalk formed by the gamma and epsilon chains, while a peripheral stalk is formed by the delta and b chains.

It is found in the cell membrane. The catalysed reaction is ATP + H2O + 4 H(+)(in) = ADP + phosphate + 5 H(+)(out). In terms of biological role, produces ATP from ADP in the presence of a proton gradient across the membrane. The alpha chain is a regulatory subunit. The sequence is that of ATP synthase subunit alpha from Pseudarthrobacter chlorophenolicus (strain ATCC 700700 / DSM 12829 / CIP 107037 / JCM 12360 / KCTC 9906 / NCIMB 13794 / A6) (Arthrobacter chlorophenolicus).